Consider the following 664-residue polypeptide: DNA ligase (664 aa).

NAD(+)-binding positions include 31 to 35 (DYEFD), 80 to 81 (SL), and Glu-110. Lys-112 acts as the N6-AMP-lysine intermediate in catalysis. NAD(+) is bound by residues Arg-133 and Glu-169. Positions 237–257 (LEKARKWGFKVPAESELKDSI) constitute a BRCT 1 domain. NAD(+) is bound by residues Lys-284 and Lys-308. Residues Cys-402, Cys-405, Cys-420, and Cys-426 each coordinate Zn(2+). Residues 586–664 (NQTNILEGNT…SEEDFLKMLE (79 aa)) form the BRCT 2 domain.

It belongs to the NAD-dependent DNA ligase family. LigA subfamily. Mg(2+) is required as a cofactor. It depends on Mn(2+) as a cofactor.

The catalysed reaction is NAD(+) + (deoxyribonucleotide)n-3'-hydroxyl + 5'-phospho-(deoxyribonucleotide)m = (deoxyribonucleotide)n+m + AMP + beta-nicotinamide D-nucleotide.. Functionally, DNA ligase that catalyzes the formation of phosphodiester linkages between 5'-phosphoryl and 3'-hydroxyl groups in double-stranded DNA using NAD as a coenzyme and as the energy source for the reaction. It is essential for DNA replication and repair of damaged DNA. The sequence is that of DNA ligase from Christiangramia forsetii (strain DSM 17595 / CGMCC 1.15422 / KT0803) (Gramella forsetii).